The sequence spans 101 residues: NAD(P)H-quinone oxidoreductase subunit 4L, chloroplastic (101 aa).

Helical transmembrane passes span 2–22 (MLEH…YGLI), 32–52 (MCLE…SDLF), and 61–81 (IFSI…PAIV).

It belongs to the complex I subunit 4L family. NDH is composed of at least 16 different subunits, 5 of which are encoded in the nucleus.

It is found in the plastid. The protein localises to the chloroplast thylakoid membrane. The catalysed reaction is a plastoquinone + NADH + (n+1) H(+)(in) = a plastoquinol + NAD(+) + n H(+)(out). It catalyses the reaction a plastoquinone + NADPH + (n+1) H(+)(in) = a plastoquinol + NADP(+) + n H(+)(out). Its function is as follows. NDH shuttles electrons from NAD(P)H:plastoquinone, via FMN and iron-sulfur (Fe-S) centers, to quinones in the photosynthetic chain and possibly in a chloroplast respiratory chain. The immediate electron acceptor for the enzyme in this species is believed to be plastoquinone. Couples the redox reaction to proton translocation, and thus conserves the redox energy in a proton gradient. This is NAD(P)H-quinone oxidoreductase subunit 4L, chloroplastic from Illicium oligandrum (Star anise).